The following is a 165-amino-acid chain: Lipoprotein signal peptidase (165 aa).

A run of 3 helical transmembrane segments spans residues W12–Q32, W70–S90, and A102–V122. Active-site residues include D123 and D141. The chain crosses the membrane as a helical span at residues F137–L157.

This sequence belongs to the peptidase A8 family.

The protein localises to the cell inner membrane. The enzyme catalyses Release of signal peptides from bacterial membrane prolipoproteins. Hydrolyzes -Xaa-Yaa-Zaa-|-(S,diacylglyceryl)Cys-, in which Xaa is hydrophobic (preferably Leu), and Yaa (Ala or Ser) and Zaa (Gly or Ala) have small, neutral side chains.. Its pathway is protein modification; lipoprotein biosynthesis (signal peptide cleavage). This protein specifically catalyzes the removal of signal peptides from prolipoproteins. The chain is Lipoprotein signal peptidase from Klebsiella aerogenes (strain ATCC 13048 / DSM 30053 / CCUG 1429 / JCM 1235 / KCTC 2190 / NBRC 13534 / NCIMB 10102 / NCTC 10006 / CDC 819-56) (Enterobacter aerogenes).